A 108-amino-acid chain; its full sequence is Transcription factor S (108 aa).

Cysteine 5, cysteine 8, cysteine 21, cysteine 24, cysteine 69, cysteine 72, cysteine 97, and cysteine 100 together coordinate Zn(2+). A C4-type zinc finger spans residues 5–24 (CPKCNNLMLPKDGKLKCAVC). A TFIIS-type zinc finger spans residues 65 to 105 (TRIECPKCGHNEAYWWLQQTRCADEPETRFYKCKKCGHTWR).

The protein belongs to the archaeal RpoM/eukaryotic RPA12/RPB9/RPC11 RNA polymerase family.

In terms of biological role, induces RNA cleavage activity in the RNA polymerase. In its presence, the cleavage activity of the RNA polymerase truncates the RNA back to position +15 in a stepwise manner by releasing mainly dinucleotides from the 3'-end of the nascent RNA. The truncated RNAs are able to continue elongation. Involved in transcriptional proofreading and fidelity. Misincorporation of nucleotides during elongation of transcription leads to arrested elongation complexes which are rescued by TFS-promoted removal of a dinucleotide from the 3'-end. TFS is able to induce a cleavage resynthesis cycle in stalled elongation complexes (resulting from the next missing nucleotide or a reduced incorporation rate of a wrong nucleotide) preventing misincorporation and enabling proofreading in a post-incorporation manner. Pausing of elongation complexes is the main determinant of TFS-induced RNA cleavage. In Methanocaldococcus jannaschii (strain ATCC 43067 / DSM 2661 / JAL-1 / JCM 10045 / NBRC 100440) (Methanococcus jannaschii), this protein is Transcription factor S.